A 336-amino-acid polypeptide reads, in one-letter code: Holliday junction branch migration complex subunit RuvB (336 aa).

The segment at Met1–Tyr175 is large ATPase domain (RuvB-L). ATP-binding positions include Leu14, Arg15, Gly56, Lys59, Thr60, Thr61, Glu122–Phe124, Arg165, Tyr175, and Arg212. Thr60 contributes to the Mg(2+) binding site. The interval Glu176–Gly253 is small ATPAse domain (RuvB-S). The tract at residues Glu256–Phe336 is head domain (RuvB-H). The DNA site is built by Arg310 and Arg315.

The protein belongs to the RuvB family. Homohexamer. Forms an RuvA(8)-RuvB(12)-Holliday junction (HJ) complex. HJ DNA is sandwiched between 2 RuvA tetramers; dsDNA enters through RuvA and exits via RuvB. An RuvB hexamer assembles on each DNA strand where it exits the tetramer. Each RuvB hexamer is contacted by two RuvA subunits (via domain III) on 2 adjacent RuvB subunits; this complex drives branch migration. In the full resolvosome a probable DNA-RuvA(4)-RuvB(12)-RuvC(2) complex forms which resolves the HJ.

It is found in the cytoplasm. It catalyses the reaction ATP + H2O = ADP + phosphate + H(+). In terms of biological role, the RuvA-RuvB-RuvC complex processes Holliday junction (HJ) DNA during genetic recombination and DNA repair, while the RuvA-RuvB complex plays an important role in the rescue of blocked DNA replication forks via replication fork reversal (RFR). RuvA specifically binds to HJ cruciform DNA, conferring on it an open structure. The RuvB hexamer acts as an ATP-dependent pump, pulling dsDNA into and through the RuvAB complex. RuvB forms 2 homohexamers on either side of HJ DNA bound by 1 or 2 RuvA tetramers; 4 subunits per hexamer contact DNA at a time. Coordinated motions by a converter formed by DNA-disengaged RuvB subunits stimulates ATP hydrolysis and nucleotide exchange. Immobilization of the converter enables RuvB to convert the ATP-contained energy into a lever motion, pulling 2 nucleotides of DNA out of the RuvA tetramer per ATP hydrolyzed, thus driving DNA branch migration. The RuvB motors rotate together with the DNA substrate, which together with the progressing nucleotide cycle form the mechanistic basis for DNA recombination by continuous HJ branch migration. Branch migration allows RuvC to scan DNA until it finds its consensus sequence, where it cleaves and resolves cruciform DNA. In Helicobacter hepaticus (strain ATCC 51449 / 3B1), this protein is Holliday junction branch migration complex subunit RuvB.